The chain runs to 196 residues: MDKKIKALIKLAENLPGLGPKSARRIVLHLLKSRETTLIRFIDTMQLLYETIKHCELCGNLESESPCSICRSTKRSSDIVCVVEEITDLWAIEKAGVHNGRYHVLNGALSIVDGITPETLQIEKLKRRVSSGAVKELIIATNATVEGQTTAQYIVEVLKGTQVKLSFLAHGIPVGSEMDYLDEGTLGIAFANRRAV.

Residues 55-70 (CELCGNLESESPCSIC) form a C4-type zinc finger. The Toprim domain occupies 78-173 (DIVCVVEEIT…KLSFLAHGIP (96 aa)).

Belongs to the RecR family.

May play a role in DNA repair. It seems to be involved in an RecBC-independent recombinational process of DNA repair. It may act with RecF and RecO. This Neorickettsia sennetsu (strain ATCC VR-367 / Miyayama) (Ehrlichia sennetsu) protein is Recombination protein RecR.